Reading from the N-terminus, the 33-residue chain is Photosystem II reaction center protein Psb30 (33 aa).

Residues Val5–Leu25 form a helical membrane-spanning segment.

The protein belongs to the Psb30/Ycf12 family. In terms of assembly, PSII is composed of 1 copy each of membrane proteins PsbA, PsbB, PsbC, PsbD, PsbE, PsbF, PsbH, PsbI, PsbJ, PsbK, PsbL, PsbM, PsbT, PsbX, PsbY, PsbZ, Psb30/Ycf12, peripheral proteins of the oxygen-evolving complex and a large number of cofactors. It forms dimeric complexes.

Its subcellular location is the plastid. The protein localises to the chloroplast thylakoid membrane. Functionally, a core subunit of photosystem II (PSII), probably helps stabilize the reaction center. In Physcomitrium patens (Spreading-leaved earth moss), this protein is Photosystem II reaction center protein Psb30.